A 129-amino-acid polypeptide reads, in one-letter code: Ribonuclease VapC12 (129 aa).

Mg(2+)-binding residues include Asp-5 and Asp-94.

It belongs to the PINc/VapC protein family. The cofactor is Mg(2+).

Its function is as follows. Toxic component of a type II toxin-antitoxin (TA) system. An RNase. The cognate antitoxin is VapB12. The sequence is that of Ribonuclease VapC12 from Mycobacterium tuberculosis (strain CDC 1551 / Oshkosh).